The chain runs to 921 residues: Retinoblastoma-associated protein (921 aa).

The interval 1–36 (MPPKAPRRAAAAEPPPPPPPPPREDDPAQDSGPEEL) is disordered. Pro-2 is modified (n,N-dimethylproline; by NTM1). 2 positions are modified to phosphoserine: Ser-31 and Ser-243. Thr-246, Thr-350, Thr-364, and Thr-367 each carry phosphothreonine. The tract at residues 341 to 360 (PIDSFETERTPRKNNPDEEA) is disordered. A compositionally biased stretch (basic and acidic residues) spans 346–356 (ETERTPRKNNP). The tract at residues 367–573 (TPVRTVMNTI…FDLIKQSKDG (207 aa)) is domain A. Positions 367–764 (TPVRTVMNTI…QRLKTNILQY (398 aa)) are pocket; binds T and E1A. Ser-561 is modified (phosphoserine; by CDK2). The spacer stretch occupies residues 574–632 (EGPDNLEPACPLSLPLQGNHTAADMYLSPLRSPKKRTSTTRVNSAANTETQAASAFHTQ). 3 positions are modified to phosphoserine: Ser-601, Ser-605, and Ser-617. The interval 633–764 (KPLKSTSLAL…QRLKTNILQY (132 aa)) is domain B. The segment at 756-921 (RLKTNILQYA…SKDVSNKEEK (166 aa)) is interaction with LIMD1. Residues 764-921 (YASTRPPTLS…SKDVSNKEEK (158 aa)) are domain; mediates interaction with E4F1. Ser-773, Ser-781, Ser-788, and Ser-800 each carry phosphoserine. Lys-803 carries the post-translational modification N6-methyllysine; by SMYD2. Residue Ser-804 is modified to Phosphoserine. 4 positions are modified to phosphothreonine: Thr-814, Thr-816, Thr-819, and Thr-834. Ser-848 is subject to Phosphoserine. The residue at position 853 (Lys-853) is an N6-methyllysine; by SMYD2. The Bipartite nuclear localization signal motif lies at 853–869 (KRSAEGGNPPKPLKKLR). Lys-866 and Lys-867 each carry N6-acetyllysine; by PCAF. Residues 872–921 (IEGADEADGSKHLPAESKFQQKLAEMTSTRTRMQKQRMNESKDVSNKEEK) form a disordered region. Residues 908 to 921 (RMNESKDVSNKEEK) are compositionally biased toward basic and acidic residues.

The protein belongs to the retinoblastoma protein (RB) family. In terms of assembly, the hypophosphorylated form interacts with and sequesters the E2F1 transcription factor, thereby inhibiting E2F1 transcription. Interacts with heterodimeric E2F/DP transcription factor complexes containing TFDP1 and either E2F1/E2F, E2F3, E2F4 or E2F5, or TFDP2 and E2F4. Interacts (when hyperphosphorylated and hypophosphorylated) with PKP3; the interaction inhibits RB1 interaction with and repression of the transcription factor E2F1, potentially via sequestering RB1 to the cytoplasm. The unphosphorylated form interacts with EID1, ARID3B, KDM5A, SUV39H1, MJD2A/JHDM3A and THOC1. Interacts with the N-terminal domain of TAF1. Interacts with SNW1, ATAD5, AATF, DNMT1, LIN9, LMNA, KMT5B, KMT5C, PELP1, UHRF2, TMPO-alpha and USP4. Interacts with GRIP1 and UBR4. Interacts with ARID4A and KDM5B. Interacts with E4F1 and LIMD1. Interacts with SMARCA4/BRG1 and HDAC1. Interacts with USP4. Interacts (when methylated at Lys-853) with L3MBTL1. Binds to CDK1 and CDK2. Interacts with CHEK2; phosphorylates RB1. Interacts with PRMT2. Interacts with CEBPA. P-TEFB complex interacts with RB1; promotes phosphorylation of RB1. Interacts with RBBP9; the interaction disrupts RB1 binding to E2F1. Interacts with KAT2B/PCAF and EP300/P300. Interacts with PAX5. Interacts (phosphorylated and unphosphorylated) with BLCAP. May interact with NDC80. As to quaternary structure, (Microbial infection) Interacts with adenovirus E1a protein. (Microbial infection) Interacts with SV40 large T antigen. In terms of processing, phosphorylated. Phosphorylated by CDK6 and CDK4, and subsequently by CDK2 at Ser-561 in G1, thereby releasing E2F1 which is then able to activate cell growth. Dephosphorylated at the late M phase. Phosphorylation of threonine residues in domain C promotes interaction between the C-terminal domain C and the Pocket domain, and thereby inhibits interactions with heterodimeric E2F/DP transcription factor complexes. Dephosphorylated at Ser-788 by calcineruin upon calcium stimulation. CDK3/cyclin-C-mediated phosphorylation at Ser-800 and Ser-804 is required for G0-G1 transition. Phosphorylated by CDK1 and CDK2 upon TGFB1-mediated apoptosis. Post-translationally, monomethylation at Lys-803 by SMYD2 enhances phosphorylation at Ser-800 and Ser-804, and promotes cell cycle progression. Monomethylation at Lys-853 by SMYD2 promotes interaction with L3MBTL1. N-terminus is methylated by METTL11A/NTM1. Acetylated in the skin. Acetylation at Lys-866 and Lys-867 regulates subcellular localization during keratinocytes differentiation. In terms of tissue distribution, expressed in the cell nuclei of renal tubules, hepatocytes and skeletal muscles. Expressed in skin (at protein level).

The protein localises to the nucleus. The protein resides in the cytoplasm. In terms of biological role, tumor suppressor that is a key regulator of the G1/S transition of the cell cycle. The hypophosphorylated form binds transcription regulators of the E2F family, preventing transcription of E2F-responsive genes. Both physically blocks E2Fs transactivating domain and recruits chromatin-modifying enzymes that actively repress transcription. Cyclin and CDK-dependent phosphorylation of RB1 induces its dissociation from E2Fs, thereby activating transcription of E2F responsive genes and triggering entry into S phase. RB1 also promotes the G0-G1 transition upon phosphorylation and activation by CDK3/cyclin-C. Directly involved in heterochromatin formation by maintaining overall chromatin structure and, in particular, that of constitutive heterochromatin by stabilizing histone methylation. Recruits and targets histone methyltransferases SUV39H1, KMT5B and KMT5C, leading to epigenetic transcriptional repression. Controls histone H4 'Lys-20' trimethylation. Inhibits the intrinsic kinase activity of TAF1. Mediates transcriptional repression by SMARCA4/BRG1 by recruiting a histone deacetylase (HDAC) complex to the c-FOS promoter. In resting neurons, transcription of the c-FOS promoter is inhibited by BRG1-dependent recruitment of a phospho-RB1-HDAC1 repressor complex. Upon calcium influx, RB1 is dephosphorylated by calcineurin, which leads to release of the repressor complex. In Mus musculus (Mouse), this protein is Retinoblastoma-associated protein (Rb1).